Consider the following 538-residue polypeptide: Tetracenomycin C resistance and export protein (538 aa).

14 consecutive transmembrane segments (helical) span residues 28–48, 65–85, 100–120, 126–146, 154–174, 181–201, 213–233, 239–259, 286–306, 319–339, 342–362, 371–391, 413–433, and 494–514; these read LLAV…VAIA, WITN…GKLG, GFAV…IVVF, LFGA…FPPG, IWSG…GLLV, AVFF…LVIL, FDVS…WGLI, GWGD…FAGF, VLMV…TFYL, VHLL…GIVI, FGPG…LWGM, MGIT…VMVG, QSAM…LMAS, and MGLA…VALF.

Belongs to the major facilitator superfamily. EmrB family.

The protein localises to the cell membrane. It functions in the pathway antibiotic biosynthesis; tetracenomycin C biosynthesis. In terms of biological role, resistance to tetracenomycin C by an active tetracenomycin C efflux system which is probably energized by transmembrane electrochemical gradients. In Streptomyces glaucescens, this protein is Tetracenomycin C resistance and export protein (tcmA).